Reading from the N-terminus, the 328-residue chain is V-set and immunoglobulin domain-containing protein 2 (328 aa).

Positions methionine 1 to alanine 24 are cleaved as a signal peptide. Residues valine 25–isoleucine 138 form the Ig-like V-type domain. Over valine 25–alanine 244 the chain is Extracellular. The cysteines at positions 46 and 122 are disulfide-linked. Residues asparagine 139, asparagine 207, and asparagine 232 are each glycosylated (N-linked (GlcNAc...) asparagine). Residues proline 145–serine 234 form the Ig-like C2-type domain. An intrachain disulfide couples cysteine 167 to cysteine 218. Residues glycine 245 to isoleucine 265 traverse the membrane as a helical segment. At arginine 266 to valine 328 the chain is on the cytoplasmic side.

Expressed in the stomach, colon and prostate.

The protein resides in the membrane. In Mus musculus (Mouse), this protein is V-set and immunoglobulin domain-containing protein 2 (Vsig2).